The chain runs to 140 residues: Large ribosomal subunit protein bL17 (140 aa).

It belongs to the bacterial ribosomal protein bL17 family. As to quaternary structure, part of the 50S ribosomal subunit. Contacts protein L32.

The chain is Large ribosomal subunit protein bL17 from Rhizobium leguminosarum bv. trifolii (strain WSM2304).